Reading from the N-terminus, the 364-residue chain is WAT1-related protein At3g30340 (364 aa).

10 consecutive transmembrane segments (helical) span residues 9–29 (WKAV…NVMF), 41–61 (VATT…AIFL), 76–96 (SLFF…LIGL), 102–122 (TFSL…ALVF), 138–158 (LLGT…KGTA), 183–203 (WAMG…WFIV), 215–235 (YTST…LSLI), 251–271 (VLAL…GMSW), 277–297 (GAVF…IFSF), and 304–324 (IYCG…ILLW). EamA domains are found at residues 26 to 152 (NVMF…LVLT) and 195 to 323 (IIWS…YILL).

The protein belongs to the drug/metabolite transporter (DMT) superfamily. Plant drug/metabolite exporter (P-DME) (TC 2.A.7.4) family.

The protein localises to the membrane. The protein is WAT1-related protein At3g30340 of Arabidopsis thaliana (Mouse-ear cress).